We begin with the raw amino-acid sequence, 261 residues long: Pyridoxine-5'-phosphate oxidase (261 aa).

A pyridoxal 5'-phosphate-binding site is contributed by 42 to 45; that stretch reads RGDP. 95–98 is an FMN binding site; the sequence is RMVL. Residue Lys-100 participates in pyridoxal 5'-phosphate binding. FMN-binding positions include 110-111, 116-117, and Gln-139; these read FT and RK. Residues Tyr-157, Arg-161, and Ser-165 each coordinate pyridoxal 5'-phosphate. FMN contacts are provided by residues 174–175 and Trp-219; that span reads QS. 225–227 is a pyridoxal 5'-phosphate binding site; that stretch reads RLH. Residue Arg-229 participates in FMN binding. Phosphothreonine is present on Thr-238. The residue at position 241 (Ser-241) is a Phosphoserine.

Belongs to the pyridoxamine 5'-phosphate oxidase family. Homodimer. It depends on FMN as a cofactor.

It catalyses the reaction pyridoxamine 5'-phosphate + O2 + H2O = pyridoxal 5'-phosphate + H2O2 + NH4(+). It carries out the reaction pyridoxine 5'-phosphate + O2 = pyridoxal 5'-phosphate + H2O2. Its pathway is cofactor metabolism; pyridoxal 5'-phosphate salvage; pyridoxal 5'-phosphate from pyridoxamine 5'-phosphate: step 1/1. The protein operates within cofactor metabolism; pyridoxal 5'-phosphate salvage; pyridoxal 5'-phosphate from pyridoxine 5'-phosphate: step 1/1. Catalyzes the oxidation of either pyridoxine 5'-phosphate (PNP) or pyridoxamine 5'-phosphate (PMP) into pyridoxal 5'-phosphate (PLP). This is Pyridoxine-5'-phosphate oxidase (PNPO) from Bos taurus (Bovine).